The sequence spans 203 residues: Holliday junction branch migration complex subunit RuvA (203 aa).

The segment at 1–64 (MIGRLRGIIL…EDAQLLYGFN (64 aa)) is domain I. Residues 65 to 142 (NKQERTLFKE…KGLHGDLFTP (78 aa)) form a domain II region. A flexible linker region spans residues 143 to 154 (AVDLVLTSPASP). Positions 155-203 (TSEDAEQEAVAALVALGYKPQEASRMVNKIARPDASSETLIRDALRAAL) are domain III.

It belongs to the RuvA family. In terms of assembly, homotetramer. Forms an RuvA(8)-RuvB(12)-Holliday junction (HJ) complex. HJ DNA is sandwiched between 2 RuvA tetramers; dsDNA enters through RuvA and exits via RuvB. An RuvB hexamer assembles on each DNA strand where it exits the tetramer. Each RuvB hexamer is contacted by two RuvA subunits (via domain III) on 2 adjacent RuvB subunits; this complex drives branch migration. In the full resolvosome a probable DNA-RuvA(4)-RuvB(12)-RuvC(2) complex forms which resolves the HJ.

It localises to the cytoplasm. Its function is as follows. The RuvA-RuvB-RuvC complex processes Holliday junction (HJ) DNA during genetic recombination and DNA repair, while the RuvA-RuvB complex plays an important role in the rescue of blocked DNA replication forks via replication fork reversal (RFR). RuvA specifically binds to HJ cruciform DNA, conferring on it an open structure. The RuvB hexamer acts as an ATP-dependent pump, pulling dsDNA into and through the RuvAB complex. HJ branch migration allows RuvC to scan DNA until it finds its consensus sequence, where it cleaves and resolves the cruciform DNA. This chain is Holliday junction branch migration complex subunit RuvA, found in Salmonella choleraesuis (strain SC-B67).